The chain runs to 1020 residues: C2 and GRAM domain-containing protein At1g03370 (1020 aa).

The C2 1 domain maps to 1–102 (MKLQVRVVEA…ENQSLGTVWY (102 aa)). Residues aspartate 17, aspartate 23, aspartate 69, aspartate 71, and aspartate 77 each contribute to the Ca(2+) site. Composition is skewed to polar residues over residues 134 to 144 (TSSGDQTSASR) and 158 to 172 (TCAS…SSIP). The tract at residues 134 to 172 (TSSGDQTSASRSPDLRLESPIDPSTCASPSRSDDASSIP) is disordered. The region spanning 249–421 (SGGVVVDQLF…LLAQSVKPVD (173 aa)) is the VASt 1 domain. The helical transmembrane segment at 454–474 (FTVLSTFLIGIYVFVHIVFAI) threads the bilayer. One can recognise a C2 2 domain in the interval 517–635 (QARKQKGSDH…NISDLADVWV (119 aa)). 5 residues coordinate Ca(2+): aspartate 551, aspartate 557, aspartate 604, phenylalanine 605, and aspartate 606. Positions 689-752 (AFQKLFGLPQ…LWEDIEEIQV (64 aa)) constitute a GRAM domain. The VASt 2 domain maps to 848–1010 (RFSEVFSLTL…MTFGFLEKEY (163 aa)).

The cofactor is Ca(2+).

The protein resides in the membrane. The polypeptide is C2 and GRAM domain-containing protein At1g03370 (Arabidopsis thaliana (Mouse-ear cress)).